We begin with the raw amino-acid sequence, 131 residues long: MTAKTEEILDSLKSLSLLEASELVKQIEEAFGVSAAASAGVVMAAPGAGGGDGDGGAAEEKTEFDVILESFDAAAKIKVLKVVRNATGLGLGDAKALVESAPKTVKEGIAKADAETLKKEIEEAGGKVTLK.

It belongs to the bacterial ribosomal protein bL12 family. As to quaternary structure, homodimer. Part of the ribosomal stalk of the 50S ribosomal subunit. Forms a multimeric L10(L12)X complex, where L10 forms an elongated spine to which 2 to 4 L12 dimers bind in a sequential fashion. Binds GTP-bound translation factors.

Forms part of the ribosomal stalk which helps the ribosome interact with GTP-bound translation factors. Is thus essential for accurate translation. The sequence is that of Large ribosomal subunit protein bL12 from Prochlorococcus marinus subsp. pastoris (strain CCMP1986 / NIES-2087 / MED4).